A 338-amino-acid chain; its full sequence is Holliday junction branch migration complex subunit RuvB (338 aa).

The tract at residues 1–22 (MVDDERVVSPETADDHEDSVEK) is disordered. Positions 4 to 185 (DERVVSPETA…FGIVEHMAYY (182 aa)) are large ATPase domain (RuvB-L). ATP-binding positions include L24, R25, G66, K69, T70, T71, 132–134 (EDF), R175, Y185, and R222. Residue T70 participates in Mg(2+) binding. Positions 186 to 257 (ETTDLQEIVL…IVDHALDLLR (72 aa)) are small ATPAse domain (RuvB-S). Positions 260–338 (SAGLDATDIK…HLGRTMPDNN (79 aa)) are head domain (RuvB-H). DNA contacts are provided by R315 and R320.

Belongs to the RuvB family. As to quaternary structure, homohexamer. Forms an RuvA(8)-RuvB(12)-Holliday junction (HJ) complex. HJ DNA is sandwiched between 2 RuvA tetramers; dsDNA enters through RuvA and exits via RuvB. An RuvB hexamer assembles on each DNA strand where it exits the tetramer. Each RuvB hexamer is contacted by two RuvA subunits (via domain III) on 2 adjacent RuvB subunits; this complex drives branch migration. In the full resolvosome a probable DNA-RuvA(4)-RuvB(12)-RuvC(2) complex forms which resolves the HJ.

It localises to the cytoplasm. It carries out the reaction ATP + H2O = ADP + phosphate + H(+). The RuvA-RuvB-RuvC complex processes Holliday junction (HJ) DNA during genetic recombination and DNA repair, while the RuvA-RuvB complex plays an important role in the rescue of blocked DNA replication forks via replication fork reversal (RFR). RuvA specifically binds to HJ cruciform DNA, conferring on it an open structure. The RuvB hexamer acts as an ATP-dependent pump, pulling dsDNA into and through the RuvAB complex. RuvB forms 2 homohexamers on either side of HJ DNA bound by 1 or 2 RuvA tetramers; 4 subunits per hexamer contact DNA at a time. Coordinated motions by a converter formed by DNA-disengaged RuvB subunits stimulates ATP hydrolysis and nucleotide exchange. Immobilization of the converter enables RuvB to convert the ATP-contained energy into a lever motion, pulling 2 nucleotides of DNA out of the RuvA tetramer per ATP hydrolyzed, thus driving DNA branch migration. The RuvB motors rotate together with the DNA substrate, which together with the progressing nucleotide cycle form the mechanistic basis for DNA recombination by continuous HJ branch migration. Branch migration allows RuvC to scan DNA until it finds its consensus sequence, where it cleaves and resolves cruciform DNA. This is Holliday junction branch migration complex subunit RuvB from Levilactobacillus brevis (strain ATCC 367 / BCRC 12310 / CIP 105137 / JCM 1170 / LMG 11437 / NCIMB 947 / NCTC 947) (Lactobacillus brevis).